The sequence spans 193 residues: Ion-translocating oxidoreductase complex subunit B (193 aa).

The interval 1-26 is hydrophobic; that stretch reads MSTMLIAVILLTLLALFFGVLLGFAA. In terms of domain architecture, 4Fe-4S spans 32–90; it reads EGNPIVDELEAILPQTQCGQCGYPGCRPYAEAIANGDKVNKCPPGGTATMEKLANLMGV. [4Fe-4S] cluster contacts are provided by Cys49, Cys52, Cys57, Cys73, Cys114, Cys117, Cys120, Cys124, Cys144, Cys147, Cys150, and Cys154. 4Fe-4S ferredoxin-type domains follow at residues 105–134 and 136–164; these read KVAY…GAGK and MHTV…MIPV.

Belongs to the 4Fe4S bacterial-type ferredoxin family. RnfB subfamily. As to quaternary structure, the complex is composed of six subunits: RnfA, RnfB, RnfC, RnfD, RnfE and RnfG. Requires [4Fe-4S] cluster as cofactor.

It localises to the cell inner membrane. Part of a membrane-bound complex that couples electron transfer with translocation of ions across the membrane. The polypeptide is Ion-translocating oxidoreductase complex subunit B (Shewanella sp. (strain ANA-3)).